The chain runs to 71 residues: Exodeoxyribonuclease 7 small subunit (71 aa).

It belongs to the XseB family. Heterooligomer composed of large and small subunits.

It localises to the cytoplasm. It catalyses the reaction Exonucleolytic cleavage in either 5'- to 3'- or 3'- to 5'-direction to yield nucleoside 5'-phosphates.. Functionally, bidirectionally degrades single-stranded DNA into large acid-insoluble oligonucleotides, which are then degraded further into small acid-soluble oligonucleotides. The sequence is that of Exodeoxyribonuclease 7 small subunit from Streptococcus uberis (strain ATCC BAA-854 / 0140J).